A 591-amino-acid chain; its full sequence is Aspartate--tRNA(Asp/Asn) ligase (591 aa).

Glu174 provides a ligand contact to L-aspartate. Residues 198–201 (QLFK) are aspartate. Arg220 contributes to the L-aspartate binding site. Residues 220 to 222 (RDE) and Gln229 each bind ATP. Residue His450 participates in L-aspartate binding. Glu483 contacts ATP. Arg490 provides a ligand contact to L-aspartate. Residue 535 to 538 (GLDR) coordinates ATP.

The protein belongs to the class-II aminoacyl-tRNA synthetase family. Type 1 subfamily. In terms of assembly, homodimer.

It localises to the cytoplasm. The catalysed reaction is tRNA(Asx) + L-aspartate + ATP = L-aspartyl-tRNA(Asx) + AMP + diphosphate. Aspartyl-tRNA synthetase with relaxed tRNA specificity since it is able to aspartylate not only its cognate tRNA(Asp) but also tRNA(Asn). Reaction proceeds in two steps: L-aspartate is first activated by ATP to form Asp-AMP and then transferred to the acceptor end of tRNA(Asp/Asn). This is Aspartate--tRNA(Asp/Asn) ligase from Pseudomonas syringae pv. tomato (strain ATCC BAA-871 / DC3000).